A 278-amino-acid chain; its full sequence is Probable endonuclease 4 (278 aa).

Zn(2+) contacts are provided by His-66, His-106, Glu-140, Asp-172, His-175, His-209, Asp-222, His-224, and Glu-254.

Belongs to the AP endonuclease 2 family. It depends on Zn(2+) as a cofactor.

The catalysed reaction is Endonucleolytic cleavage to 5'-phosphooligonucleotide end-products.. Its function is as follows. Endonuclease IV plays a role in DNA repair. It cleaves phosphodiester bonds at apurinic or apyrimidinic (AP) sites, generating a 3'-hydroxyl group and a 5'-terminal sugar phosphate. In Haloquadratum walsbyi (strain DSM 16790 / HBSQ001), this protein is Probable endonuclease 4.